The sequence spans 204 residues: Probable proteasome subunit beta type-3 (204 aa).

This sequence belongs to the peptidase T1B family. The 26S proteasome consists of a 20S proteasome core and two 19S regulatory subunits. The 20S proteasome core is composed of 28 subunits that are arranged in four stacked rings, resulting in a barrel-shaped structure. The two end rings are each formed by seven alpha subunits, and the two central rings are each formed by seven beta subunits. The catalytic chamber with the active sites is on the inside of the barrel.

It localises to the cytoplasm. Its subcellular location is the nucleus. In terms of biological role, non-catalytic component of the proteasome, a multicatalytic proteinase complex which is characterized by its ability to cleave peptides with Arg, Phe, Tyr, Leu, and Glu adjacent to the leaving group at neutral or slightly basic pH. The proteasome has an ATP-dependent proteolytic activity. In Schizosaccharomyces pombe (strain 972 / ATCC 24843) (Fission yeast), this protein is Probable proteasome subunit beta type-3 (pup3).